The sequence spans 559 residues: Leucine-rich repeat protein soc-2 (559 aa).

Basic and acidic residues predominate over residues 1 to 17 (METSKEFEFRPAKETSR). Residues 1–55 (METSKEFEFRPAKETSRSKSPGGIVGRLSNFARNKARHSLSEKGSNSVGGSGGAG) are disordered. LRR repeat units follow at residues 74-95 (QDQR…IKEL), 97-118 (QLTE…IGQL), 120-142 (NLKK…ASLE), 143-164 (SLET…IYKI), 166-187 (SLET…IGNL), 189-210 (KLKM…IGKL), 212-233 (SLVV…IGDC), 235-256 (SLTQ…IGKL), 258-279 (NLVR…LESC), 281-302 (QLEE…LLTM), 305-326 (KIHT…GPQQ), 329-350 (STVT…IFSK), 353-374 (RLTK…MGSW), 376-397 (SITE…IEKL), 399-420 (NLEI…IGNL), 422-443 (KLRE…IGFL), 445-466 (HLTK…IGNL), 468-489 (SLQD…IGHL), 491-513 (SLKS…LALC), and 515-536 (SLEI…ITAG).

Belongs to the SHOC2 family. As to quaternary structure, interacts with let-60.

In terms of biological role, acts as a Ras effector and participates in MAPK pathway activation. Probably acts as a scaffolding protein in a protein phosphatase complex that specifically dephosphorylates Raf kinase and stimulates Raf activity at specialized signaling complexes upon Ras activation. Required for vulval development. Involved in fluid homeostasis. Plays a role in nicotinic acetylcholine receptor (nAChR)-mediated sensitivity to nicotine. This chain is Leucine-rich repeat protein soc-2 (soc-2), found in Caenorhabditis elegans.